Here is a 250-residue protein sequence, read N- to C-terminus: Kv channel-interacting protein 4 (250 aa).

Residues 2–44 (NVRRVESISAQLEEASSTGGFLYAQNNTKRSIKERLMKLLPCS) form a KIS region. Phosphoserine occurs at positions 17 and 56. Positions 61 to 117 (LEMATVRHRPEALELLEAQSKFTKKELQILYRGFKNECPSGVVNEETFKEIYSQFFP) constitute an EF-hand 1; degenerate domain. EF-hand domains are found at residues 120 to 155 (DSTT…LLRG), 156 to 191 (TVQE…IYDM), and 204 to 239 (APRQ…DENI). The Ca(2+) site is built by D133, D135, N137, D144, D169, N171, D173, Y175, E180, D217, N219, D221, and E228. The interaction with KCND2 stretch occupies residues 237 to 250 (ENIMRSMQLFENVI).

Belongs to the recoverin family. Component of heteromultimeric potassium channels. Identified in potassium channel complexes containing KCND1, KCND2, KCND3, KCNIP1, KCNIP2, KCNIP3, KCNIP4, DPP6 and DPP10. Interacts with the C-terminus of PSEN2 and probably PSEN1. Interacts with KCND2 and KCND3. In terms of tissue distribution, expressed in brain. Highly expressed by neurons in layers II-IV of cortex and in hippocampus, thalamus and the Purkinje cell layer of the cerebellum.

The protein localises to the cell membrane. It localises to the cytoplasm. The protein resides in the peroxisome. Functionally, regulatory subunit of Kv4/D (Shal)-type voltage-gated rapidly inactivating A-type potassium channels, such as KCND2/Kv4.2 and KCND3/Kv4.3. Modulates channel expression at the cell membrane, gating characteristics, inactivation kinetics and rate of recovery from inactivation in a calcium-dependent and isoform-specific manner. This is Kv channel-interacting protein 4 (Kcnip4) from Mus musculus (Mouse).